The chain runs to 1964 residues: Probable helicase with zinc finger domain (1964 aa).

Residues 178 to 206 form a C3H1-type zinc finger; that stretch reads SEEYTLCKRFLEQGICRYGAQCTSAHSQE. A Phosphoserine modification is found at serine 248. 668 to 675 contacts ATP; that stretch reads GPYGTGKT. Positions 794–797 match the DEAA box motif; it reads DEAA. The segment covering 1116–1127 has biased composition (polar residues); the sequence is HSGNSSRQQQSP. The interval 1116–1135 is disordered; sequence HSGNSSRQQQSPPKVKSLYH. Threonine 1163 bears the Phosphothreonine mark. At arginine 1245 the chain carries Omega-N-methylarginine. 6 disordered regions span residues 1248 to 1350, 1360 to 1379, 1388 to 1449, 1463 to 1491, 1631 to 1655, and 1743 to 1964; these read PIPY…LPAP, HFHP…QPHT, LPEQ…QAGP, QSPA…RAIT, QVQP…QFAN, and QHAA…SYFK. Composition is skewed to basic and acidic residues over residues 1268-1281 and 1292-1308; these read HAEK…RNGK and NKIR…KQVD. Pro residues predominate over residues 1365-1374; sequence PQLPRPPFPA. Positions 1388–1431 are enriched in low complexity; it reads LPEQPNQMAPQPNQVAPQPNQMTPQPNQVAPQPNQVVQQQSQAP. Positions 1635–1644 are enriched in pro residues; the sequence is RSPPAVPSPP. 4 positions are modified to phosphoserine: serine 1636, serine 1760, serine 1763, and serine 1788. Residues 1755-1765 show a composition bias toward polar residues; the sequence is SSRTVSASSLP. Polar residues-rich tracts occupy residues 1799 to 1813 and 1826 to 1849; these read PQDS…QGHS and WANT…TSQP. Residues 1860–1870 show a composition bias toward basic and acidic residues; it reads KPPEDQLKPES. 2 stretches are compositionally biased toward polar residues: residues 1872-1881 and 1897-1910; these read EVSSSFNYSM and IAES…QSPA. Low complexity predominate over residues 1941–1956; it reads PLSLLQELSLGSSPGS.

This sequence belongs to the DNA2/NAM7 helicase family. In terms of assembly, interacts with POLR2A. Interacts with SMYD3; the interaction may bridge SMYD3 and RNA polymerase II. Interacts with SMYD2.

Its subcellular location is the nucleus. In terms of biological role, may act as a helicase that plays a role in RNA metabolism in multiple tissues and organs within the developing embryo. This chain is Probable helicase with zinc finger domain (Helz), found in Mus musculus (Mouse).